Here is a 599-residue protein sequence, read N- to C-terminus: Spermatogenesis-associated protein 7 (599 aa).

Residues 163–205 form a disordered region; it reads KSSKVITNGPEKNSSSSPSSVDYAASGPRKLSSGALYGRRPRS. A compositionally biased stretch (polar residues) spans 166 to 175; the sequence is KVITNGPEKN.

In terms of assembly, found in a complex with CFAP410, NEK1 and SPATA7. Interacts with NEK1. Interacts with RPGRIP1. Interacts with RPGR. Interacts with NPHP4. Interacts with NPHP1. Interacts with AHI1.

The protein localises to the cytoplasm. The protein resides in the cytoskeleton. It localises to the cilium axoneme. Its subcellular location is the cilium basal body. It is found in the cell projection. The protein localises to the cilium. The protein resides in the photoreceptor outer segment. Its function is as follows. Involved in the maintenance of both rod and cone photoreceptor cells. It is required for recruitment and proper localization of RPGRIP1 to the photoreceptor connecting cilium (CC), as well as photoreceptor-specific localization of proximal CC proteins at the distal CC. Maintenance of protein localization at the photoreceptor-specific distal CC is essential for normal microtubule stability and to prevent photoreceptor degeneration. This chain is Spermatogenesis-associated protein 7 (SPATA7), found in Homo sapiens (Human).